We begin with the raw amino-acid sequence, 594 residues long: MALEDRCSPQSAPSPPHHHHSSQSPTSTTTVTMATASPVPACTTTTTTTSTSGASAASSPTRDEMSLVVPISPLHIKQEPLGSDGPMPAQPPHHHQHPHHHQLPHHPHHQHHPQQQPSPQTSPPASISFSITNILSDRFGKATAEQQQQPHPQPPAIREPISPGPIHPAVLLPYPQHVLHPAHHPALLHPAYHTGLHHYYQPSPSHPQPIVPQPQRASLERRDSLFRPYDISKSPRLCSSNGSSSATPLPLHPYHTDSDCSTQDSTSAPSPATYGDIASPSSASSAMTTPVTTSSPTGSVYDYSRKASALDHRAALLNGFSAAASYPKLHEEIINPPQVPGEADRIANEGGTGCGGHGCCGGSATPHNMPPLGSLCKTVSQIGQHVAGTGSLNGSGSAANGASNGGSGAPATAKPTPKPIPKPAPSSETNGSSSQDAGMESSDDAKSETSSTKDGSENGSNLWPAWVYCTRYSDRPSSGPRYRRTKQPKEKGDSEEKRPRTAFSNAQLQRLKNEFNENRYLTEKRRQTLSAELGLNEAQIKIWFQNKRAKIKKSSSEKNPLALQLMAQGLYNHSTVPLTKEEEELEMRMNGQIP.

7 disordered regions span residues 1–64, 76–127, 141–164, 198–217, 231–299, 387–458, and 474–501; these read MALE…TRDE, IKQE…PASI, KATA…ISPG, HYYQ…PQRA, ISKS…PTGS, AGTG…GSEN, and DRPS…RPRT. The segment covering 22 to 60 has biased composition (low complexity); it reads SQSPTSTTTVTMATASPVPACTTTTTTTSTSGASAASSP. Residues 92–112 are compositionally biased toward basic residues; the sequence is PHHHQHPHHHQLPHHPHHQHH. A compositionally biased stretch (pro residues) spans 151 to 164; it reads HPQPPAIREPISPG. Polar residues predominate over residues 237–247; the sequence is LCSSNGSSSAT. Low complexity-rich tracts occupy residues 278–299 and 387–402; these read ASPS…PTGS and AGTG…ANGA. 2 stretches are compositionally biased toward polar residues: residues 426-436 and 448-458; these read SSETNGSSSQD and ETSSTKDGSEN. Residues 487 to 499 are compositionally biased toward basic and acidic residues; that stretch reads QPKEKGDSEEKRP. A DNA-binding region (homeobox) is located at residues 496-555; that stretch reads EKRPRTAFSNAQLQRLKNEFNENRYLTEKRRQTLSAELGLNEAQIKIWFQNKRAKIKKSS.

This sequence belongs to the engrailed homeobox family.

Its subcellular location is the nucleus. This protein specifies the body segmentation pattern. It is required for the development of the central nervous system. Transcriptional regulator that repress activated promoters. This chain is Segmentation polarity homeobox protein engrailed (en), found in Anopheles gambiae (African malaria mosquito).